Here is a 577-residue protein sequence, read N- to C-terminus: Arginine--tRNA ligase (577 aa).

The short motif at 122 to 132 (PNVAKEMHVGH) is the 'HIGH' region element.

It belongs to the class-I aminoacyl-tRNA synthetase family. As to quaternary structure, monomer.

It localises to the cytoplasm. It carries out the reaction tRNA(Arg) + L-arginine + ATP = L-arginyl-tRNA(Arg) + AMP + diphosphate. The chain is Arginine--tRNA ligase from Salmonella arizonae (strain ATCC BAA-731 / CDC346-86 / RSK2980).